Consider the following 403-residue polypeptide: Accessory Sec system protein translocase subunit SecY2 (403 aa).

10 helical membrane passes run 17–37 (MLYT…SIVS), 63–83 (LNIF…LMLI), 105–125 (ILTL…YVSK), 131–151 (DNIY…VWLA), 157–177 (YGIA…MMHQ), 186–206 (HIVI…LLFI), 240–260 (ITLM…HFIL), 276–296 (FDSP…GYFL), 339–359 (WFGS…TLFV), and 366–386 (IYFS…AETI).

The protein belongs to the SecY/SEC61-alpha family. SecY2 subfamily. Component of the accessory SecA2/SecY2 protein translocase complex required to export cell wall proteins. May form heterotrimers with SecE and SecG subunits.

The protein resides in the cell membrane. Its function is as follows. Part of the accessory SecA2/SecY2 system specifically required for export of possible cell wall proteins. The central subunit of a protein translocation channel. In Staphylococcus aureus (strain N315), this protein is Accessory Sec system protein translocase subunit SecY2.